Consider the following 288-residue polypeptide: 33 kDa chaperonin (288 aa).

2 cysteine pairs are disulfide-bonded: C235–C237 and C268–C271.

It belongs to the HSP33 family. In terms of processing, under oxidizing conditions two disulfide bonds are formed involving the reactive cysteines. Under reducing conditions zinc is bound to the reactive cysteines and the protein is inactive.

The protein resides in the cytoplasm. In terms of biological role, redox regulated molecular chaperone. Protects both thermally unfolding and oxidatively damaged proteins from irreversible aggregation. Plays an important role in the bacterial defense system toward oxidative stress. The polypeptide is 33 kDa chaperonin (Streptococcus thermophilus (strain CNRZ 1066)).